The chain runs to 288 residues: 4-hydroxybenzoate octaprenyltransferase (288 aa).

6 helical membrane passes run 33 to 53, 99 to 119, 163 to 183, 213 to 233, 234 to 254, and 268 to 288; these read LWAL…AVFV, LFIV…TMTI, ESLP…AVAY, LIIG…GWLN, GLGW…GWQQ, and AFMN…MSYL.

The protein belongs to the UbiA prenyltransferase family. Mg(2+) serves as cofactor.

The protein localises to the cell inner membrane. The enzyme catalyses all-trans-octaprenyl diphosphate + 4-hydroxybenzoate = 4-hydroxy-3-(all-trans-octaprenyl)benzoate + diphosphate. It functions in the pathway cofactor biosynthesis; ubiquinone biosynthesis. Its function is as follows. Catalyzes the prenylation of para-hydroxybenzoate (PHB) with an all-trans polyprenyl group. Mediates the second step in the final reaction sequence of ubiquinone-8 (UQ-8) biosynthesis, which is the condensation of the polyisoprenoid side chain with PHB, generating the first membrane-bound Q intermediate 3-octaprenyl-4-hydroxybenzoate. The chain is 4-hydroxybenzoate octaprenyltransferase from Klebsiella pneumoniae subsp. pneumoniae (strain ATCC 700721 / MGH 78578).